Reading from the N-terminus, the 803-residue chain is Dynein axonemal intermediate chain 4 (803 aa).

The span at 1-33 (MPSSPTSTRKQTNFTASVSAQSRKSISFGNPKS) shows a compositional bias: polar residues. Disordered regions lie at residues 1 to 41 (MPSS…GYAG), 88 to 109 (LYHP…SQEG), and 143 to 163 (STVS…LEDP). Positions 143–155 (STVSKSSISTTES) are enriched in low complexity. WD repeat units lie at residues 492–532 (QSPY…NTPV), 541–589 (KHLG…DCHD), 616–656 (SRQA…QYLE), 660–700 (GHKG…PFFT), 703–742 (PTTY…LDPL), and 748–787 (NPGI…TPTE).

In terms of assembly, part of the multisubunit axonemal dynein complex formed at least of two heavy chains and a number of intermediate and light chains. Associated with axonemal dynein subunits such as, DNAH2, DNAI3, and DYNLT1. Interacts with DYNLT1.

The protein resides in the cytoplasm. It localises to the cytoskeleton. It is found in the flagellum axoneme. The protein localises to the cilium axoneme. Its subcellular location is the dynein axonemal particle. Its function is as follows. Plays a critical role in the assembly of axonemal dynein complex, thereby playing a role in ciliary motility. The protein is Dynein axonemal intermediate chain 4 of Rattus norvegicus (Rat).